We begin with the raw amino-acid sequence, 120 residues long: Large ribosomal subunit protein uL22 (120 aa).

This sequence belongs to the universal ribosomal protein uL22 family. As to quaternary structure, part of the 50S ribosomal subunit.

In terms of biological role, this protein binds specifically to 23S rRNA; its binding is stimulated by other ribosomal proteins, e.g. L4, L17, and L20. It is important during the early stages of 50S assembly. It makes multiple contacts with different domains of the 23S rRNA in the assembled 50S subunit and ribosome. Functionally, the globular domain of the protein is located near the polypeptide exit tunnel on the outside of the subunit, while an extended beta-hairpin is found that lines the wall of the exit tunnel in the center of the 70S ribosome. This is Large ribosomal subunit protein uL22 from Corynebacterium glutamicum (strain R).